A 159-amino-acid chain; its full sequence is MAGISSARLSEERKNWRRDHPYGFFARPSTNTDGSLNLYVWNCGIPGKTKTNWEGGVYPLIMEFTEDYPSKPPKCRFPKDFFHPNVYPSGTVCLSILNEEADWKPSVTIKTVLLGIQDLLDNPNPKSPAQQLPIHLFLTNKEEYDKKVKAQSKVYPPPQ.

The 154-residue stretch at 4-157 (ISSARLSEER…VKAQSKVYPP (154 aa)) folds into the UBC core domain. Cys-93 functions as the Glycyl thioester intermediate in the catalytic mechanism.

The protein belongs to the ubiquitin-conjugating enzyme family.

The protein localises to the nucleus. Its pathway is protein modification; protein sumoylation. Its function is as follows. Accepts the ubiquitin-like protein sumo from the E1 complex and catalyzes its covalent attachment to other proteins with the help of an E3 ligase. The protein is Sumo-conjugating enzyme ubc9 (ubc9) of Dictyostelium discoideum (Social amoeba).